We begin with the raw amino-acid sequence, 72 residues long: Translation initiation factor IF-1 (72 aa).

Positions 1–72 constitute an S1-like domain; that stretch reads MSKQDVIEFD…TKGRITYRGK (72 aa).

It belongs to the IF-1 family. In terms of assembly, component of the 30S ribosomal translation pre-initiation complex which assembles on the 30S ribosome in the order IF-2 and IF-3, IF-1 and N-formylmethionyl-tRNA(fMet); mRNA recruitment can occur at any time during PIC assembly.

It is found in the cytoplasm. One of the essential components for the initiation of protein synthesis. Stabilizes the binding of IF-2 and IF-3 on the 30S subunit to which N-formylmethionyl-tRNA(fMet) subsequently binds. Helps modulate mRNA selection, yielding the 30S pre-initiation complex (PIC). Upon addition of the 50S ribosomal subunit IF-1, IF-2 and IF-3 are released leaving the mature 70S translation initiation complex. The chain is Translation initiation factor IF-1 from Hydrogenovibrio crunogenus (strain DSM 25203 / XCL-2) (Thiomicrospira crunogena).